The following is a 148-amino-acid chain: Large ribosomal subunit protein uL15 (148 aa).

Basic residues predominate over residues 1-30 (MPSRLRKTRKLRGHVSHGHGRIGKHRKHPG). Residues 1 to 38 (MPSRLRKTRKLRGHVSHGHGRIGKHRKHPGGRGNAGGL) form a disordered region. His39 carries the (3S)-3-hydroxyhistidine modification. N6-acetyllysine is present on residues Lys47 and Lys55. Ser68 is subject to Phosphoserine. The residue at position 110 (Lys110) is an N6-acetyllysine.

Belongs to the universal ribosomal protein uL15 family. In terms of processing, hydroxylated on His-39 by MINA.

The protein is Large ribosomal subunit protein uL15 (RPL27A) of Pan troglodytes (Chimpanzee).